Consider the following 109-residue polypeptide: Large ribosomal subunit protein uL22 (109 aa).

The protein belongs to the universal ribosomal protein uL22 family. Part of the 50S ribosomal subunit.

Its function is as follows. This protein binds specifically to 23S rRNA; its binding is stimulated by other ribosomal proteins, e.g. L4, L17, and L20. It is important during the early stages of 50S assembly. It makes multiple contacts with different domains of the 23S rRNA in the assembled 50S subunit and ribosome. Functionally, the globular domain of the protein is located near the polypeptide exit tunnel on the outside of the subunit, while an extended beta-hairpin is found that lines the wall of the exit tunnel in the center of the 70S ribosome. This Ralstonia pickettii (strain 12J) protein is Large ribosomal subunit protein uL22.